Reading from the N-terminus, the 131-residue chain is Small ribosomal subunit protein uS11 (131 aa).

Belongs to the universal ribosomal protein uS11 family. As to quaternary structure, part of the 30S ribosomal subunit. Interacts with proteins S7 and S18. Binds to IF-3.

Located on the platform of the 30S subunit, it bridges several disparate RNA helices of the 16S rRNA. Forms part of the Shine-Dalgarno cleft in the 70S ribosome. The protein is Small ribosomal subunit protein uS11 of Helicobacter pylori (strain G27).